Consider the following 440-residue polypeptide: Tubby-like F-box protein 13 (440 aa).

The 56-residue stretch at 51 to 106 folds into the F-box domain; sequence SCWASLPPELLRDIIERLEESEATWPSRKHVVACAGVCRTWREMCKEIVKNPELCG.

Belongs to the TUB family. In terms of tissue distribution, ubiquitous.

The chain is Tubby-like F-box protein 13 (TULP13) from Oryza sativa subsp. japonica (Rice).